The primary structure comprises 447 residues: UDP-N-acetylglucosamine 1-carboxyvinyltransferase (447 aa).

Residue 27–28 coordinates phosphoenolpyruvate; that stretch reads KN. Arg-97 contacts UDP-N-acetyl-alpha-D-glucosamine. Residue Cys-121 is the Proton donor of the active site. Cys-121 bears the 2-(S-cysteinyl)pyruvic acid O-phosphothioketal mark. UDP-N-acetyl-alpha-D-glucosamine is bound by residues 126 to 130, Asp-314, and Val-336; that span reads RPVDL.

This sequence belongs to the EPSP synthase family. MurA subfamily.

Its subcellular location is the cytoplasm. The enzyme catalyses phosphoenolpyruvate + UDP-N-acetyl-alpha-D-glucosamine = UDP-N-acetyl-3-O-(1-carboxyvinyl)-alpha-D-glucosamine + phosphate. It participates in cell wall biogenesis; peptidoglycan biosynthesis. Cell wall formation. Adds enolpyruvyl to UDP-N-acetylglucosamine. This chain is UDP-N-acetylglucosamine 1-carboxyvinyltransferase, found in Trichormus variabilis (strain ATCC 29413 / PCC 7937) (Anabaena variabilis).